The following is a 295-amino-acid chain: Alpha-soluble NSF attachment protein (295 aa).

M1 is subject to N-acetylmethionine. A phosphoserine mark is found at S26, S29, and S195.

Belongs to the SNAP family. Interacts with PRKCABP, and disrupts the interaction between GRIA2 and PRKCABP, leading to the internalization of GRIA2. Found in a complex with VAMP8. Component of a SNARE-like complex that contains at least ZW10, USE1L, RINT1, STX18 and NAPA/SNAP-alpha. Interacts with VTI1A. Interacts with STX12. Interacts with GNA12 (via N-terminus); the interaction promotes CDH5 localization to plasma membrane.

The protein resides in the cell membrane. Required for vesicular transport between the endoplasmic reticulum and the Golgi apparatus. Together with GNA12 promotes CDH5 localization to plasma membrane. The polypeptide is Alpha-soluble NSF attachment protein (Napa) (Mus musculus (Mouse)).